A 179-amino-acid chain; its full sequence is Large ribosomal subunit protein uL5 (179 aa).

This sequence belongs to the universal ribosomal protein uL5 family. Part of the 50S ribosomal subunit; part of the 5S rRNA/L5/L18/L25 subcomplex. Contacts the 5S rRNA and the P site tRNA. Forms a bridge to the 30S subunit in the 70S ribosome.

Its function is as follows. This is one of the proteins that bind and probably mediate the attachment of the 5S RNA into the large ribosomal subunit, where it forms part of the central protuberance. In the 70S ribosome it contacts protein S13 of the 30S subunit (bridge B1b), connecting the 2 subunits; this bridge is implicated in subunit movement. Contacts the P site tRNA; the 5S rRNA and some of its associated proteins might help stabilize positioning of ribosome-bound tRNAs. The polypeptide is Large ribosomal subunit protein uL5 (Tolumonas auensis (strain DSM 9187 / NBRC 110442 / TA 4)).